We begin with the raw amino-acid sequence, 133 residues long: ATP synthase epsilon chain, chloroplastic (133 aa).

This sequence belongs to the ATPase epsilon chain family. F-type ATPases have 2 components, CF(1) - the catalytic core - and CF(0) - the membrane proton channel. CF(1) has five subunits: alpha(3), beta(3), gamma(1), delta(1), epsilon(1). CF(0) has three main subunits: a, b and c.

It is found in the plastid. It localises to the chloroplast thylakoid membrane. Produces ATP from ADP in the presence of a proton gradient across the membrane. The protein is ATP synthase epsilon chain, chloroplastic of Jasminum nudiflorum (Winter jasmine).